The chain runs to 745 residues: Multiple C2 domain and transmembrane region protein 13 (745 aa).

Residues 1-30 (MAANKDEFSVKQISPKLGGERGARNPYGPT) form a disordered region. C2 domains follow at residues 21 to 139 (RGAR…PQRY), 171 to 293 (DASE…SAPA), and 326 to 453 (AEES…ACSY). Ca(2+) contacts are provided by D56, D61, D106, and N110. Transmembrane regions (helical) follow at residues 568 to 588 (SLIV…LVGL) and 688 to 708 (FYCW…PMWL).

Belongs to the MCTP family. Ca(2+) serves as cofactor. Expressed in incipient leaf primordia.

Its subcellular location is the cell membrane. The protein resides in the cytoplasm. In terms of biological role, may function as a signaling molecule by regulating the trafficking of other regulators. The sequence is that of Multiple C2 domain and transmembrane region protein 13 from Arabidopsis thaliana (Mouse-ear cress).